A 310-amino-acid chain; its full sequence is Protein TIFY 6A (310 aa).

Residues 141–176 (SKPLPPQLTIFYAGSVLVYQDIAPEKAQAIMLLAGN) form the Tify domain. The short motif at 259-284 (PQTRKASLARFLEKRKERVINVSPYY) is the Jas element. The Nuclear localization signal motif lies at 261–268 (TRKASLAR).

It belongs to the TIFY/JAZ family. Homo- and heterodimer. Interacts with MYC2, AFPH2/NINJA, TIFY10A/JAZ1, TIFY6B/JAZ3, TIFY5A/JAZ8, TIFY9/JAZ10 and TIFY3A/JAZ11. Interacts with RHD6 and RSL1. Post-translationally, ubiquitinated. Targeted for degradation by the SCF(COI1) E3 ubiquitin ligase-proteasome pathway during jasmonate signaling.

It is found in the nucleus. Repressor of jasmonate responses. Interacts with and suppresses RHD6 and RSL1 transcription factor activities to negatively regulate jasmonate-stimulated root hair development. In Arabidopsis thaliana (Mouse-ear cress), this protein is Protein TIFY 6A (TIFY6A).